Here is a 509-residue protein sequence, read N- to C-terminus: Bifunctional purine biosynthesis protein PurH (509 aa).

In terms of domain architecture, MGS-like spans 1–144 (MKRALISVSD…KNYAAVTVVV (144 aa)).

The protein belongs to the PurH family.

It carries out the reaction (6R)-10-formyltetrahydrofolate + 5-amino-1-(5-phospho-beta-D-ribosyl)imidazole-4-carboxamide = 5-formamido-1-(5-phospho-D-ribosyl)imidazole-4-carboxamide + (6S)-5,6,7,8-tetrahydrofolate. The enzyme catalyses IMP + H2O = 5-formamido-1-(5-phospho-D-ribosyl)imidazole-4-carboxamide. Its pathway is purine metabolism; IMP biosynthesis via de novo pathway; 5-formamido-1-(5-phospho-D-ribosyl)imidazole-4-carboxamide from 5-amino-1-(5-phospho-D-ribosyl)imidazole-4-carboxamide (10-formyl THF route): step 1/1. The protein operates within purine metabolism; IMP biosynthesis via de novo pathway; IMP from 5-formamido-1-(5-phospho-D-ribosyl)imidazole-4-carboxamide: step 1/1. The chain is Bifunctional purine biosynthesis protein PurH from Listeria monocytogenes serotype 4b (strain F2365).